A 252-amino-acid polypeptide reads, in one-letter code: tRNA pseudouridine synthase A (252 aa).

The active-site Nucleophile is Asp-52. A substrate-binding site is contributed by Tyr-112.

Belongs to the tRNA pseudouridine synthase TruA family. In terms of assembly, homodimer.

The enzyme catalyses uridine(38/39/40) in tRNA = pseudouridine(38/39/40) in tRNA. Formation of pseudouridine at positions 38, 39 and 40 in the anticodon stem and loop of transfer RNAs. In Porphyromonas gingivalis (strain ATCC 33277 / DSM 20709 / CIP 103683 / JCM 12257 / NCTC 11834 / 2561), this protein is tRNA pseudouridine synthase A.